The following is a 90-amino-acid chain: Probable Fe(2+)-trafficking protein (90 aa).

This sequence belongs to the Fe(2+)-trafficking protein family.

Its function is as follows. Could be a mediator in iron transactions between iron acquisition and iron-requiring processes, such as synthesis and/or repair of Fe-S clusters in biosynthetic enzymes. The polypeptide is Probable Fe(2+)-trafficking protein (Saccharophagus degradans (strain 2-40 / ATCC 43961 / DSM 17024)).